The primary structure comprises 527 residues: Endogenous retrovirus group FC1 member 1 Env polyprotein (527 aa).

The interval 1–411 is surface protein; the sequence is MNSPCDRLQQ…EPRPQNKSKW (411 aa). The CXXC motif lies at 280–283; the sequence is CFLC. The fusion peptide stretch occupies residues 412–432; that stretch reads AIFLPLVLGISLASSLVASGL. The segment at 412 to 527 is transmembrane protein; the sequence is AIFLPLVLGI…LKKKKSSKRS (116 aa). The CKS-17 motif lies at 477–493; sequence AQNRQALDLLMAEKGRT. C494 and C501 form a disulfide bridge. Positions 494–502 match the CX6CC motif; it reads CLFLQEECC.

Belongs to the gamma type-C retroviral envelope protein family. HERV class-I F(c)2 env subfamily. Post-translationally, the CXXC motif is highly conserved across a broad range of retroviral envelope proteins. It is thought to participate in the formation of a labile disulfide bond possibly with the CX6CC motif present in the transmembrane domain. As to expression, low expression in skin and testis.

Its subcellular location is the virion. Retroviral envelope proteins mediate receptor recognition and membrane fusion during early infection. Endogenous envelope proteins may have kept, lost or modified their original function during evolution. This endogenous envelope protein has lost its original fusogenic properties. The protein is Endogenous retrovirus group FC1 member 1 Env polyprotein (ERVFC1-1) of Homo sapiens (Human).